Here is a 110-residue protein sequence, read N- to C-terminus: Class I hydrophobin 2 (110 aa).

Positions 1 to 17 are cleaved as a signal peptide; it reads MQFKFLTTVALATLAVA. Disulfide bonds link Cys-28–Cys-89, Cys-36–Cys-83, Cys-37–Cys-71, and Cys-90–Cys-103. Residue Asn-57 is glycosylated (N-linked (GlcNAc...) asparagine).

This sequence belongs to the fungal hydrophobin family. In terms of assembly, self-assembles to form functional amyloid fibrils called rodlets. Self-assembly into fibrillar rodlets occurs spontaneously at hydrophobic:hydrophilic interfaces and the rodlets further associate laterally to form amphipathic monolayers.

It is found in the secreted. Its subcellular location is the cell wall. Aerial growth, conidiation, and dispersal of filamentous fungi in the environment rely upon a capability of their secreting small amphipathic proteins called hydrophobins (HPBs) with low sequence identity. Class I can self-assemble into an outermost layer of rodlet bundles on aerial cell surfaces, conferring cellular hydrophobicity that supports fungal growth, development and dispersal; whereas Class II form highly ordered films at water-air interfaces through intermolecular interactions but contribute nothing to the rodlet structure. CoH2 is an asexual monokaryon-specific class I hydrophobin that is involved in aerial growth of mycelia. The protein is Class I hydrophobin 2 of Coprinopsis cinerea (Inky cap fungus).